Reading from the N-terminus, the 104-residue chain is L-rhamnose mutarotase (104 aa).

Substrate is bound at residue Tyr18. His22 (proton donor) is an active-site residue. Residues Tyr41 and 76 to 77 (WW) contribute to the substrate site.

It belongs to the rhamnose mutarotase family. Homodimer.

The protein localises to the cytoplasm. The enzyme catalyses alpha-L-rhamnose = beta-L-rhamnose. It participates in carbohydrate metabolism; L-rhamnose metabolism. Involved in the anomeric conversion of L-rhamnose. In Mannheimia succiniciproducens (strain KCTC 0769BP / MBEL55E), this protein is L-rhamnose mutarotase.